The following is a 403-amino-acid chain: Anti-sigma-I factor RsgI8 (403 aa).

Residues 1-59 (MTKQKGTILKLKNNLAIIMTSDCKIVSIKRQPGMYEGLEISFNKNEIINKKNKLAFYSR) lie on the Cytoplasmic side of the membrane. The 48-residue stretch at 4–51 (QKGTILKLKNNLAIIMTSDCKIVSIKRQPGMYEGLEISFNKNEIINKK) folds into the RsgI N-terminal anti-sigma domain. Residues 60 to 80 (IAAGIAAIFIIMVISFNLFNN) form a helical membrane-spanning segment. The Extracellular segment spans residues 81 to 403 (NDVYAYVAID…KAKNSIEKMP (323 aa)). Composition is skewed to basic and acidic residues over residues 254–314 (VHNV…EPAK), 324–335 (LPKDKTIPEEKT), and 349–403 (VEPK…EKMP). Residues 254 to 403 (VHNVKKEEPK…KAKNSIEKMP (150 aa)) are disordered.

Interacts (via RsgI N-terminal anti-sigma domain) with SigI8.

It localises to the cell membrane. Functionally, anti-sigma factor for SigI8. Negatively regulates SigI8 activity through direct interaction. This chain is Anti-sigma-I factor RsgI8, found in Acetivibrio thermocellus (strain ATCC 27405 / DSM 1237 / JCM 9322 / NBRC 103400 / NCIMB 10682 / NRRL B-4536 / VPI 7372) (Clostridium thermocellum).